The sequence spans 264 residues: Ribosomal protein L11 methyltransferase (264 aa).

Residues T116, G137, D159, and N200 each coordinate S-adenosyl-L-methionine.

It belongs to the methyltransferase superfamily. PrmA family.

The protein localises to the cytoplasm. The enzyme catalyses L-lysyl-[protein] + 3 S-adenosyl-L-methionine = N(6),N(6),N(6)-trimethyl-L-lysyl-[protein] + 3 S-adenosyl-L-homocysteine + 3 H(+). Methylates ribosomal protein L11. The polypeptide is Ribosomal protein L11 methyltransferase (Thermotoga maritima (strain ATCC 43589 / DSM 3109 / JCM 10099 / NBRC 100826 / MSB8)).